Reading from the N-terminus, the 553-residue chain is Putative transport protein YidE (553 aa).

A run of 5 helical transmembrane segments spans residues 4 to 24 (IALT…IGNI), 28 to 48 (GVGF…HFVD), 65 to 85 (FGLI…FFAS), 95 to 115 (LFAV…HKIF), and 158 to 178 (MSYA…MWLM). RCK C-terminal domains lie at 192–276 (KHES…VIGK) and 279–361 (DTSL…VVGN). 5 helical membrane passes run 371 to 391 (MLPV…PLFV), 403 to 425 (AGGP…LYWF), 437 to 457 (LGIV…FVNT), 464 to 484 (LSWI…VGLL), and 533 to 553 (LVMF…WGIG).

The protein belongs to the AAE transporter (TC 2.A.81) family. YidE subfamily.

It localises to the cell membrane. The sequence is that of Putative transport protein YidE from Salmonella arizonae (strain ATCC BAA-731 / CDC346-86 / RSK2980).